Reading from the N-terminus, the 488-residue chain is GTPase Der (488 aa).

2 EngA-type G domains span residues 3 to 166 (PVVA…AEAM) and 199 to 372 (IKLA…DSAT). Residues 9–16 (GRPNVGKS), 56–60 (DTGGI), 118–121 (NKVD), 205–212 (GKPNVGKS), 252–256 (DTAGV), and 317–320 (NKWD) each bind GTP. Residues 373–457 (RRVSTSMLTR…PIQLRFQEGD (85 aa)) form the KH-like domain. A disordered region spans residues 469-488 (MSQERRRKRALSHIKDRKTK). Positions 473–488 (RRRKRALSHIKDRKTK) are enriched in basic residues.

This sequence belongs to the TRAFAC class TrmE-Era-EngA-EngB-Septin-like GTPase superfamily. EngA (Der) GTPase family. As to quaternary structure, associates with the 50S ribosomal subunit.

In terms of biological role, GTPase that plays an essential role in the late steps of ribosome biogenesis. The sequence is that of GTPase Der from Shewanella putrefaciens (strain CN-32 / ATCC BAA-453).